An 89-amino-acid polypeptide reads, in one-letter code: Large ribosomal subunit protein uL29 (89 aa).

It belongs to the universal ribosomal protein uL29 family.

This chain is Large ribosomal subunit protein uL29, found in Frankia alni (strain DSM 45986 / CECT 9034 / ACN14a).